A 1242-amino-acid polypeptide reads, in one-letter code: Structural polyprotein (1242 aa).

Positions M1–P36 are necessary for nucleocapsid assembly and virus assembly. Residues M1 to M104 form a disordered region. The tract at residues L37–K70 is host transcription inhibition. The Supraphysiological nuclear export signal signature appears at L44–L51. Basic residues predominate over residues A66–M104. The Nuclear localization signal motif lies at K67–K70. The segment at K83–T113 is binding to the viral RNA. The interval P98–K112 is ribosome-binding. Phosphoserine is present on S110. One can recognise a Peptidase S3 domain in the interval K112–W261. T113 carries the phosphothreonine modification. Active-site charge relay system residues include H138, D160, and S212. The functions as an uncleaved signal peptide for the precursor of protein E3/E2 stretch occupies residues S262 to I273. N272 carries an N-linked (GlcNAc...) asparagine; by host glycan. Residues D325–T688 are Extracellular-facing. The helical transmembrane segment at I689–L709 threads the bilayer. Residues L710 to A744 are Cytoplasmic-facing. 3 S-palmitoyl cysteine; by host lipidation sites follow: C717, C737, and C738. The interval C717–C737 is transient transmembrane before p62-6K protein processing. At D745–Q759 the chain is on the extracellular side. Transmembrane regions (helical) follow at residues N760–L780 and R781–A801. At Y802 to S1218 the chain is on the extracellular side. Intrachain disulfides connect C850-C915, C863-C895, C864-C897, C869-C879, C1061-C1073, C1103-C1178, C1108-C1182, and C1130-C1172. The tract at residues V885 to T902 is E1 fusion peptide loop. Residues T1219–T1239 traverse the membrane as a helical segment. The Cytoplasmic portion of the chain corresponds to H1240–H1242.

Part of a tetrameric complex composed of host CRM1, host importin alpha/beta dimer and the viral capsid; this complex blocks the receptor-mediated transport through the nuclear pore. Interacts with host phosphatase PPP1CA; this interaction dephosphorylates the capsid protein, which increases its ability to bind to the viral genome. Interacts with host karyopherin KPNA4; this interaction allows the nuclear import of the viral capsid protein. Interacts with spike glycoprotein E2. Interacts with host IRAK1; the interaction leads to inhibition of IRAK1-dependent signaling. In terms of assembly, the precursor of protein E3/E2 and E1 form a heterodimer shortly after synthesis. As to quaternary structure, the precursor of protein E3/E2 and E1 form a heterodimer shortly after synthesis. Processing of the precursor of protein E3/E2 into E2 and E3 results in a heterodimer of the spike glycoproteins E2 and E1. Spike at virion surface are constituted of three E2-E1 heterodimers. After target cell attachment and endocytosis, E1 change conformation to form homotrimers. Interacts with 6K protein. Processing of the precursor of protein E3/E2 into E2 and E3 results in a heterodimer of the spike glycoproteins E2 and E1. Spike at virion surface are constituted of three E2-E1 heterodimers. Interacts with 6K protein. In terms of assembly, interacts with spike glycoprotein E1. Interacts with spike glycoprotein E2. Post-translationally, structural polyprotein: Specific enzymatic cleavages in vivo yield mature proteins. Capsid protein is auto-cleaved during polyprotein translation, unmasking a signal peptide at the N-terminus of the precursor of E3/E2. The remaining polyprotein is then targeted to the host endoplasmic reticulum, where host signal peptidase cleaves it into pE2, 6K and E1 proteins. pE2 is further processed to mature E3 and E2 by host furin in trans-Golgi vesicle. In terms of processing, phosphorylated on serine and threonine residues. Palmitoylated via thioester bonds. These palmitoylations may induce disruption of the C-terminus transmembrane. This would result in the reorientation of E2 C-terminus from lumenal to cytoplasmic side. Post-translationally, N-glycosylated. In terms of processing, palmitoylated via thioester bonds.

It localises to the virion. Its subcellular location is the host cytoplasm. The protein localises to the host cell membrane. It is found in the host nucleus. The protein resides in the virion membrane. It catalyses the reaction Autocatalytic release of the core protein from the N-terminus of the togavirus structural polyprotein by hydrolysis of a -Trp-|-Ser- bond.. In terms of biological role, forms an icosahedral capsid with a T=4 symmetry composed of 240 copies of the capsid protein surrounded by a lipid membrane through which penetrate 80 spikes composed of trimers of E1-E2 heterodimers. The capsid protein binds to the viral RNA genome at a site adjacent to a ribosome binding site for viral genome translation following genome release. Possesses a protease activity that results in its autocatalytic cleavage from the nascent structural protein. Following its self-cleavage, the capsid protein transiently associates with ribosomes, and within several minutes the protein binds to viral RNA and rapidly assembles into icosahedric core particles. The resulting nucleocapsid eventually associates with the cytoplasmic domain of the spike glycoprotein E2 at the cell membrane, leading to budding and formation of mature virions. In case of infection, new virions attach to target cells and after clathrin-mediated endocytosis their membrane fuses with the host endosomal membrane. This leads to the release of the nucleocapsid into the cytoplasm, followed by an uncoating event necessary for the genomic RNA to become accessible. The uncoating might be triggered by the interaction of capsid proteins with ribosomes. Binding of ribosomes would release the genomic RNA since the same region is genomic RNA-binding and ribosome-binding. Specifically inhibits interleukin-1 receptor-associated kinase 1/IRAK1-dependent signaling during viral entry, representing a means by which the alphaviruses may evade innate immune detection and activation prior to viral gene expression. Inhibits host transcription. Forms a tetrameric complex with XPO1/CRM1 and the nuclear import receptor importin. This complex blocks the central channel of host nuclear pores thereby inhibiting the receptor-mediated nuclear transport and thus the host mRNA and rRNA transcription. The inhibition of transcription is linked to a cytopathic effect on the host cell. Functionally, provides the signal sequence for the translocation of the precursor of protein E3/E2 to the host endoplasmic reticulum. Furin-cleaved E3 remains associated with spike glycoprotein E1 and mediates pH protection of the latter during the transport via the secretory pathway. After virion release from the host cell, the assembly protein E3 is gradually released in the extracellular space. Its function is as follows. Plays a role in viral attachment to target host cell, by binding to the cell receptor. Synthesized as a p62 precursor which is processed by furin at the cell membrane just before virion budding, giving rise to E2-E1 heterodimer. The p62-E1 heterodimer is stable, whereas E2-E1 is unstable and dissociate at low pH. p62 is processed at the last step, presumably to avoid E1 fusion activation before its final export to cell surface. E2 C-terminus contains a transitory transmembrane that would be disrupted by palmitoylation, resulting in reorientation of the C-terminal tail from lumenal to cytoplasmic side. This step is critical since E2 C-terminus is involved in budding by interacting with capsid proteins. This release of E2 C-terminus in cytoplasm occurs lately in protein export, and precludes premature assembly of particles at the endoplasmic reticulum membrane. Constitutive membrane protein involved in virus glycoprotein processing, cell permeabilization, and the budding of viral particles. Disrupts the calcium homeostasis of the cell, probably at the endoplasmic reticulum level. This leads to cytoplasmic calcium elevation. Because of its lipophilic properties, the 6K protein is postulated to influence the selection of lipids that interact with the transmembrane domains of the glycoproteins, which, in turn, affects the deformability of the bilayer required for the extreme curvature that occurs as budding proceeds. Present in low amount in virions, about 3% compared to viral glycoproteins. In terms of biological role, class II viral fusion protein. Fusion activity is inactive as long as E1 is bound to E2 in mature virion. After virus attachment to target cell and endocytosis, acidification of the endosome would induce dissociation of E1/E2 heterodimer and concomitant trimerization of the E1 subunits. This E1 trimer is fusion active, and promotes release of viral nucleocapsid in cytoplasm after endosome and viral membrane fusion. Efficient fusion requires the presence of cholesterol and sphingolipid in the target membrane. Fusion is optimal at levels of about 1 molecule of cholesterol per 2 molecules of phospholipids, and is specific for sterols containing a 3-beta-hydroxyl group. This chain is Structural polyprotein, found in Aedes (Human).